A 332-amino-acid polypeptide reads, in one-letter code: Glycerol-3-phosphate dehydrogenase [NAD(P)+] (332 aa).

NADPH is bound by residues Ser10, Trp11, Lys31, and Lys105. Sn-glycerol 3-phosphate is bound by residues Lys105, Gly136, and Ser138. Position 140 (Ala140) interacts with NADPH. Sn-glycerol 3-phosphate contacts are provided by Lys191, Asp244, Ser254, Arg255, and Asn256. Lys191 acts as the Proton acceptor in catalysis. Arg255 is a binding site for NADPH. NADPH-binding residues include Val279 and Glu281.

It belongs to the NAD-dependent glycerol-3-phosphate dehydrogenase family.

The protein resides in the cytoplasm. The catalysed reaction is sn-glycerol 3-phosphate + NAD(+) = dihydroxyacetone phosphate + NADH + H(+). It catalyses the reaction sn-glycerol 3-phosphate + NADP(+) = dihydroxyacetone phosphate + NADPH + H(+). It functions in the pathway membrane lipid metabolism; glycerophospholipid metabolism. In terms of biological role, catalyzes the reduction of the glycolytic intermediate dihydroxyacetone phosphate (DHAP) to sn-glycerol 3-phosphate (G3P), the key precursor for phospholipid synthesis. The sequence is that of Glycerol-3-phosphate dehydrogenase [NAD(P)+] from Anaeromyxobacter dehalogenans (strain 2CP-C).